We begin with the raw amino-acid sequence, 536 residues long: Solute carrier family 2, facilitated glucose transporter member 10 (536 aa).

Topologically, residues Met1–Ser15 are cytoplasmic. The chain crosses the membrane as a helical span at residues Leu16–Leu36. Topologically, residues Gln37–Glu48 are extracellular. The helical transmembrane segment at Leu49–Ile69 threads the bilayer. Residues Asp70 to Asn82 are Cytoplasmic-facing. A helical transmembrane segment spans residues Ala83–Leu103. Residues Gly104–Ser107 lie on the Extracellular side of the membrane. The helical transmembrane segment at Val108–Gly128 threads the bilayer. Residues Pro129 to Arg132 lie on the Cytoplasmic side of the membrane. Residues Gly133–Leu153 form a helical membrane-spanning segment. The Extracellular segment spans residues Asn154–His166. A helical transmembrane segment spans residues Met167 to Ala187. Residues Gly188–Thr232 lie on the Cytoplasmic side of the membrane. Residues Val233–Tyr253 form a helical membrane-spanning segment. Position 242-243 (Gln242–Gln243) interacts with D-glucose. Topologically, residues Ala254–Ala269 are extracellular. Residues Val270–Leu290 traverse the membrane as a helical segment. The Cytoplasmic portion of the chain corresponds to Val291–Val298. The chain crosses the membrane as a helical span at residues Leu299 to Phe319. Residues Ala320–Thr402 are Extracellular-facing. A helical transmembrane segment spans residues Leu403 to Phe423. Residues Gly424–Arg442 are Cytoplasmic-facing. Residue Trp428 participates in D-glucose binding. The helical transmembrane segment at Ala443–Leu463 threads the bilayer. Over Asp464 to Ala468 the chain is Extracellular. The chain crosses the membrane as a helical span at residues Ile469–Ile489. Residues Tyr490–Ser536 lie on the Cytoplasmic side of the membrane.

This sequence belongs to the major facilitator superfamily. Sugar transporter (TC 2.A.1.1) family. Glucose transporter subfamily.

Its subcellular location is the endomembrane system. The protein localises to the cytoplasm. It is found in the perinuclear region. The enzyme catalyses D-glucose(out) = D-glucose(in). Facilitative glucose transporter required for the development of the cardiovascular system. This Mus musculus (Mouse) protein is Solute carrier family 2, facilitated glucose transporter member 10.